A 283-amino-acid polypeptide reads, in one-letter code: tRNA-cytidine(32) 2-sulfurtransferase (283 aa).

The PP-loop motif motif lies at 32 to 37 (SGGKDS). Cys-107, Cys-110, and Cys-198 together coordinate [4Fe-4S] cluster.

This sequence belongs to the TtcA family. In terms of assembly, homodimer. Mg(2+) serves as cofactor. The cofactor is [4Fe-4S] cluster.

It is found in the cytoplasm. It catalyses the reaction cytidine(32) in tRNA + S-sulfanyl-L-cysteinyl-[cysteine desulfurase] + AH2 + ATP = 2-thiocytidine(32) in tRNA + L-cysteinyl-[cysteine desulfurase] + A + AMP + diphosphate + H(+). It functions in the pathway tRNA modification. In terms of biological role, catalyzes the ATP-dependent 2-thiolation of cytidine in position 32 of tRNA, to form 2-thiocytidine (s(2)C32). The sulfur atoms are provided by the cysteine/cysteine desulfurase (IscS) system. In Sorangium cellulosum (strain So ce56) (Polyangium cellulosum (strain So ce56)), this protein is tRNA-cytidine(32) 2-sulfurtransferase.